Consider the following 87-residue polypeptide: Putative outer membrane protein ArbH (87 aa).

Residues 1-23 (MKIKNSYLVIASLLYPISFISTA) form the signal peptide.

This sequence belongs to the porin LamB (TC 1.B.3) family.

It is found in the cell outer membrane. Its function is as follows. May be a sugar porin with a broad carbohydrate specificity. This chain is Putative outer membrane protein ArbH (arbH), found in Dickeya chrysanthemi (Pectobacterium chrysanthemi).